The sequence spans 958 residues: Valine--tRNA ligase (958 aa).

Residues 42-52 (PNVTGSLHMGH) carry the 'HIGH' region motif. Residues 554-558 (KMSKS) carry the 'KMSKS' region motif. Residue K557 participates in ATP binding. The stretch at 887 to 956 (LVDVAAEMAR…TEQKAEFAKL (70 aa)) forms a coiled coil.

Belongs to the class-I aminoacyl-tRNA synthetase family. ValS type 1 subfamily. In terms of assembly, monomer.

The protein resides in the cytoplasm. The enzyme catalyses tRNA(Val) + L-valine + ATP = L-valyl-tRNA(Val) + AMP + diphosphate. Its function is as follows. Catalyzes the attachment of valine to tRNA(Val). As ValRS can inadvertently accommodate and process structurally similar amino acids such as threonine, to avoid such errors, it has a 'posttransfer' editing activity that hydrolyzes mischarged Thr-tRNA(Val) in a tRNA-dependent manner. In Shewanella oneidensis (strain ATCC 700550 / JCM 31522 / CIP 106686 / LMG 19005 / NCIMB 14063 / MR-1), this protein is Valine--tRNA ligase.